We begin with the raw amino-acid sequence, 163 residues long: Putative pre-16S rRNA nuclease (163 aa).

Belongs to the YqgF nuclease family.

It is found in the cytoplasm. Its function is as follows. Could be a nuclease involved in processing of the 5'-end of pre-16S rRNA. The polypeptide is Putative pre-16S rRNA nuclease (Rhodopseudomonas palustris (strain BisB18)).